Here is a 325-residue protein sequence, read N- to C-terminus: uncharacterized protein (325 aa).

The tract at residues 1 to 32 (MKQEYIPLDEFPNKSNEGMLNDEGTSSSGLST) is disordered. Positions 23–32 (EGTSSSGLST) are enriched in low complexity. Positions 135 to 223 (AEEISNLKTS…LKKREDLLRL (89 aa)) form a coiled coil.

It is found in the cytoplasm. It localises to the cytoskeleton. The protein resides in the microtubule organizing center. Its subcellular location is the spindle pole body. This is an uncharacterized protein from Schizosaccharomyces pombe (strain 972 / ATCC 24843) (Fission yeast).